The sequence spans 200 residues: MGGKWSKSSIVGWPAIRERIRAAEGVGAVSQDLDKRGAITNSNTGATNADLAWLEAQEEEVGFPVRPQVPLRPMTYKAALDLSHFLKEKGGLEGLIYSRKRQEILDLWVYHTQGYFPDWQNYTPGPGPRFPLTFGWCFKLVPVDPEEVEKANEGENNCLLHPMSLHGMEDDDKEVLKWQFDSRLALRHIARERHPEYYKD.

The N-myristoyl glycine; by host moiety is linked to residue Gly2. Position 6 is a phosphoserine; by host (Ser6). Residues 58–60 form an acidic; interacts with host PACS1 and PACS2; stabilizes the interaction of NEF/MHC-I with host AP1M1; necessary for MHC-I internalization region; it reads EEE. The tract at residues 64–73 is SH3-binding; interaction with Src family tyrosine kinases; that stretch reads PVRPQVPLRP. Residues 67–70 carry the PxxP; stabilizes the interaction of NEF/MHC-I with host AP1M1; necessary for MHC-I internalization motif; sequence PQVP. A mediates dimerization, Nef-PTE1 interaction region spans residues 103-119; sequence EILDLWVYHTQGYFPDW. Residues 143–175 are binding to ATP6V1H; it reads VDPEEVEKANEGENNCLLHPMSLHGMEDDDKEV. The short motif at 159-160 is the Dileucine internalization motif; necessary for CD4 internalization element; the sequence is LL. The short motif at 169–170 is the Diacidic; necessary for CD4 internalization element; it reads ED.

It belongs to the lentivirus primate group Nef protein family. In terms of assembly, monomer; cytosolic form. Homodimer; membrane bound form. Interacts with Nef associated p21-activated kinase (PAK2); this interaction activates PAK2. Associates with the Nef-MHC-I-AP1 complex; this complex is required for MHC-I internalization. Interacts (via C-terminus) with host PI3-kinase. Interacts with host PACS1; this interaction seems to be weak. Interacts with host PACS2. Interacts with host LCK and MAPK3; these interactions inhibit the kinase activity of the latter. Interacts with host ATP6V1H; this interaction may play a role in CD4 endocytosis. Associates with the CD4-Nef-AP2 complex; this complex is required for CD4 internalization. Interacts with host AP2 subunit alpha and AP2 subunit sigma2. Interacts with TCR-zeta chain; this interaction up-regulates the Fas ligand (FasL) surface expression. Interacts with host HCK, LYN, and SRC; these interactions activate the Src family kinases. Interacts with MAP3K5; this interaction inhibits the Fas and TNFR-mediated death signals. Interacts with beta-COP and PTE1. Interacts with human RACK1; this increases Nef phosphorylation by PKC. Interacts with TP53; this interaction decreases the half-life of TP53, protecting the infected cell against p53-mediated apoptosis. In terms of processing, the virion-associated Nef proteins are cleaved by the viral protease to release the soluble C-terminal core protein. Nef is probably cleaved concomitantly with viral structural proteins on maturation of virus particles. Post-translationally, myristoylated. Phosphorylated on serine residues, probably by host PKCdelta and theta.

It is found in the host cell membrane. It localises to the virion. Its subcellular location is the secreted. The protein resides in the host Golgi apparatus membrane. Functionally, factor of infectivity and pathogenicity, required for optimal virus replication. Alters numerous pathways of T-lymphocyte function and down-regulates immunity surface molecules in order to evade host defense and increase viral infectivity. Alters the functionality of other immunity cells, like dendritic cells, monocytes/macrophages and NK cells. In terms of biological role, in infected CD4(+) T-lymphocytes, down-regulates the surface MHC-I, mature MHC-II, CD4, CD28, CCR5 and CXCR4 molecules. Mediates internalization and degradation of host CD4 through the interaction of with the cytoplasmic tail of CD4, the recruitment of AP-2 (clathrin adapter protein complex 2), internalization through clathrin coated pits, and subsequent transport to endosomes and lysosomes for degradation. Diverts host MHC-I molecules to the trans-Golgi network-associated endosomal compartments by an endocytic pathway to finally target them for degradation. MHC-I down-regulation may involve AP-1 (clathrin adapter protein complex 1) or possibly Src family kinase-ZAP70/Syk-PI3K cascade recruited by PACS2. In consequence infected cells are masked for immune recognition by cytotoxic T-lymphocytes. Decreasing the number of immune receptors also prevents reinfection by more HIV particles (superinfection). Down-regulates host SERINC3 and SERINC5 thereby excluding these proteins from the viral particles. Virion infectivity is drastically higher when SERINC3 or SERINC5 are excluded from the viral envelope, because these host antiviral proteins impair the membrane fusion event necessary for subsequent virion penetration. Bypasses host T-cell signaling by inducing a transcriptional program nearly identical to that of anti-CD3 cell activation. Interaction with TCR-zeta chain up-regulates the Fas ligand (FasL). Increasing surface FasL molecules and decreasing surface MHC-I molecules on infected CD4(+) cells send attacking cytotoxic CD8+ T-lymphocytes into apoptosis. Its function is as follows. Plays a role in optimizing the host cell environment for viral replication without causing cell death by apoptosis. Protects the infected cells from apoptosis in order to keep them alive until the next virus generation is ready to strike. Inhibits the Fas and TNFR-mediated death signals by blocking MAP3K5/ASK1. Decreases the half-life of TP53, protecting the infected cell against p53-mediated apoptosis. Inhibits the apoptotic signals regulated by the Bcl-2 family proteins through the formation of a Nef/PI3-kinase/PAK2 complex that leads to activation of PAK2 and induces phosphorylation of host BAD. Functionally, extracellular Nef protein targets CD4(+) T-lymphocytes for apoptosis by interacting with CXCR4 surface receptors. This is Protein Nef from Homo sapiens (Human).